A 334-amino-acid polypeptide reads, in one-letter code: GTP 3',8-cyclase (334 aa).

In terms of domain architecture, Radical SAM core spans 13 to 239 (KFHRKFYYLR…KVRSHHDGPA (227 aa)). R22 provides a ligand contact to GTP. C29 and C33 together coordinate [4Fe-4S] cluster. Y35 is an S-adenosyl-L-methionine binding site. C36 serves as a coordination point for [4Fe-4S] cluster. R73 is a binding site for GTP. G77 contacts S-adenosyl-L-methionine. T104 lines the GTP pocket. S128 lines the S-adenosyl-L-methionine pocket. A GTP-binding site is contributed by K165. M199 lines the S-adenosyl-L-methionine pocket. [4Fe-4S] cluster-binding residues include C262 and C265. 267–269 (RLR) is a GTP binding site. C279 lines the [4Fe-4S] cluster pocket.

Belongs to the radical SAM superfamily. MoaA family. Monomer and homodimer. [4Fe-4S] cluster is required as a cofactor.

The enzyme catalyses GTP + AH2 + S-adenosyl-L-methionine = (8S)-3',8-cyclo-7,8-dihydroguanosine 5'-triphosphate + 5'-deoxyadenosine + L-methionine + A + H(+). It participates in cofactor biosynthesis; molybdopterin biosynthesis. In terms of biological role, catalyzes the cyclization of GTP to (8S)-3',8-cyclo-7,8-dihydroguanosine 5'-triphosphate. The chain is GTP 3',8-cyclase from Vibrio parahaemolyticus serotype O3:K6 (strain RIMD 2210633).